The following is a 273-amino-acid chain: Large ribosomal subunit protein uL2 (273 aa).

The segment at 228–273 (IDHPHGGGEGKTSGGRHPVTPWGFSTKGKKTRKNKRTSKFIVKKRK) is disordered. Residues 254-273 (KGKKTRKNKRTSKFIVKKRK) are compositionally biased toward basic residues.

It belongs to the universal ribosomal protein uL2 family. As to quaternary structure, part of the 50S ribosomal subunit. Forms a bridge to the 30S subunit in the 70S ribosome.

One of the primary rRNA binding proteins. Required for association of the 30S and 50S subunits to form the 70S ribosome, for tRNA binding and peptide bond formation. It has been suggested to have peptidyltransferase activity; this is somewhat controversial. Makes several contacts with the 16S rRNA in the 70S ribosome. This chain is Large ribosomal subunit protein uL2, found in Rickettsia typhi (strain ATCC VR-144 / Wilmington).